The sequence spans 232 residues: Phosphatidylserine decarboxylase proenzyme (232 aa).

Ser-190 serves as the catalytic Schiff-base intermediate with substrate; via pyruvic acid. At Ser-190 the chain carries Pyruvic acid (Ser); by autocatalysis.

The protein belongs to the phosphatidylserine decarboxylase family. PSD-A subfamily. In terms of assembly, heterodimer of a large membrane-associated beta subunit and a small pyruvoyl-containing alpha subunit. Requires pyruvate as cofactor. Post-translationally, is synthesized initially as an inactive proenzyme. Formation of the active enzyme involves a self-maturation process in which the active site pyruvoyl group is generated from an internal serine residue via an autocatalytic post-translational modification. Two non-identical subunits are generated from the proenzyme in this reaction, and the pyruvate is formed at the N-terminus of the alpha chain, which is derived from the carboxyl end of the proenzyme. The post-translation cleavage follows an unusual pathway, termed non-hydrolytic serinolysis, in which the side chain hydroxyl group of the serine supplies its oxygen atom to form the C-terminus of the beta chain, while the remainder of the serine residue undergoes an oxidative deamination to produce ammonia and the pyruvoyl prosthetic group on the alpha chain.

It localises to the cell membrane. The enzyme catalyses a 1,2-diacyl-sn-glycero-3-phospho-L-serine + H(+) = a 1,2-diacyl-sn-glycero-3-phosphoethanolamine + CO2. It participates in phospholipid metabolism; phosphatidylethanolamine biosynthesis; phosphatidylethanolamine from CDP-diacylglycerol: step 2/2. Functionally, catalyzes the formation of phosphatidylethanolamine (PtdEtn) from phosphatidylserine (PtdSer). The sequence is that of Phosphatidylserine decarboxylase proenzyme from Rhizobium johnstonii (strain DSM 114642 / LMG 32736 / 3841) (Rhizobium leguminosarum bv. viciae).